A 332-amino-acid chain; its full sequence is Ornithine carbamoyltransferase 1, catabolic (332 aa).

Residues 56-59, glutamine 83, arginine 107, and 134-137 each bind carbamoyl phosphate; these read STRT and HPTQ. Residues asparagine 167, aspartate 231, and 235-236 contribute to the L-ornithine site; that span reads SM. Residues 273 to 274 and arginine 318 each bind carbamoyl phosphate; that span reads CL.

It belongs to the aspartate/ornithine carbamoyltransferase superfamily. OTCase family.

The protein resides in the cytoplasm. The catalysed reaction is carbamoyl phosphate + L-ornithine = L-citrulline + phosphate + H(+). The protein operates within amino-acid degradation; L-arginine degradation via ADI pathway; carbamoyl phosphate from L-arginine: step 2/2. Its function is as follows. Reversibly catalyzes the transfer of the carbamoyl group from carbamoyl phosphate (CP) to the N(epsilon) atom of ornithine (ORN) to produce L-citrulline. This chain is Ornithine carbamoyltransferase 1, catabolic (arcB1), found in Streptococcus agalactiae serotype III (strain NEM316).